A 268-amino-acid polypeptide reads, in one-letter code: Aliphatic sulfonates import ATP-binding protein SsuB 3 (268 aa).

A disordered region spans residues 1–27 (MTAAEAPLPPLAPRERTATTAAERRTG). Positions 13–26 (PRERTATTAAERRT) are enriched in basic and acidic residues. The 216-residue stretch at 32–247 (VSLSGVRKSF…DRNDPEALRY (216 aa)) folds into the ABC transporter domain. 64–71 (GPSGTGKT) contributes to the ATP binding site.

It belongs to the ABC transporter superfamily. Aliphatic sulfonates importer (TC 3.A.1.17.2) family. The complex is composed of two ATP-binding proteins (SsuB), two transmembrane proteins (SsuC) and a solute-binding protein (SsuA).

The protein localises to the cell membrane. It carries out the reaction ATP + H2O + aliphatic sulfonate-[sulfonate-binding protein]Side 1 = ADP + phosphate + aliphatic sulfonateSide 2 + [sulfonate-binding protein]Side 1.. Its function is as follows. Part of the ABC transporter complex SsuABC involved in aliphatic sulfonates import. Responsible for energy coupling to the transport system. This chain is Aliphatic sulfonates import ATP-binding protein SsuB 3, found in Rhodococcus jostii (strain RHA1).